A 754-amino-acid polypeptide reads, in one-letter code: Ribonucleoside-diphosphate reductase subunit alpha (754 aa).

The ATP-cone domain maps to 4–93 (INVIKSSGVS…MFALRKHVYG (90 aa)). Substrate-binding positions include threonine 206, 221–222 (SC), glycine 250, 435–439 (NLCCE), and 615–619 (PCESS). Cysteines 222 and 457 form a disulfide. Catalysis depends on asparagine 435, which acts as the Proton acceptor. Cysteine 437 functions as the Cysteine radical intermediate in the catalytic mechanism. The active-site Proton acceptor is glutamate 439. Residues 621-641 (QVSNSTNGYEPPRGPVSVKES) are disordered.

It belongs to the ribonucleoside diphosphate reductase large chain family. Heterodimer of a large and a small subunit.

The enzyme catalyses a 2'-deoxyribonucleoside 5'-diphosphate + [thioredoxin]-disulfide + H2O = a ribonucleoside 5'-diphosphate + [thioredoxin]-dithiol. Under complex allosteric control mediated by deoxynucleoside triphosphates and ATP binding. The type of nucleotide bound at the specificity site determines substrate preference. It seems probable that ATP makes the enzyme reduce CDP and UDP, dGTP favors ADP reduction and dTTP favors GDP reduction. Its function is as follows. Provides the precursors necessary for DNA synthesis. Catalyzes the biosynthesis of deoxyribonucleotides from the corresponding ribonucleotides. The sequence is that of Ribonucleoside-diphosphate reductase subunit alpha (NRDA) from Escherichia coli (Bacteriophage T4).